We begin with the raw amino-acid sequence, 842 residues long: MutS protein homolog him-14 (842 aa).

The tract at residues 1-21 is disordered; that stretch reads MYSNKSFQRRQRQQVAESRSE. 588–595 is an ATP binding site; the sequence is GPNMAGKS.

This sequence belongs to the DNA mismatch repair MutS family. Heterooligomer of him-14 and msh-5.

The protein resides in the nucleus. In terms of biological role, required during the pachytene stage of meiotic prophase for the formation of crossovers between homologous chromosomes. Together with msh-5 and zhp-3 plays a role in the activation of DNA damage-dependent apoptosis at the DNA damage checkpoint in pachytene cells. Not needed for pairing or synapsis. May promote crossing over by interfering with Holliday junction branch migration. Has no apparent role in DNA mismatch repair. This is MutS protein homolog him-14 from Caenorhabditis elegans.